Reading from the N-terminus, the 152-residue chain is Transcriptional regulator MraZ (152 aa).

SpoVT-AbrB domains lie at A5 to E52 and A81 to A124.

Belongs to the MraZ family. As to quaternary structure, forms oligomers.

The protein localises to the cytoplasm. The protein resides in the nucleoid. In Shewanella sp. (strain ANA-3), this protein is Transcriptional regulator MraZ.